Reading from the N-terminus, the 208-residue chain is Thymidylate kinase (208 aa).

Residue 11-18 (GGEGAGKS) coordinates ATP.

This sequence belongs to the thymidylate kinase family.

It catalyses the reaction dTMP + ATP = dTDP + ADP. Its function is as follows. Phosphorylation of dTMP to form dTDP in both de novo and salvage pathways of dTTP synthesis. In Caulobacter vibrioides (strain ATCC 19089 / CIP 103742 / CB 15) (Caulobacter crescentus), this protein is Thymidylate kinase (tmk).